A 565-amino-acid polypeptide reads, in one-letter code: MKATQTLIATTKELPKEAVLISHQYMLKAGLIKKLASGIYTWMPLGLKVLQKIQNIVRDEMNKAGASELLLPSILPSELLQETHRWDKFGPELLKLHDRHNRDFCYGPTHEEPIVDMARDTIKSYKQLPLNLYQIQTKFRDEIRPRFGVMRAREFIMKDAYSFHENSQCLRNTYNTMYATYCNILDKIGLAYRPVKADTGAIGGDNSHEFQVLANAGEDIICYSNGSDYAANIELATYAKPDLSKRVNSQNTIEKIHTPNIKTIEKLCKEMSFDIKKTIKTMVIKDAEGNFFALVIRGDHELNETKINKLEQIVAPYTLATKEEIFSIFNANPGSLGIYNCPISIIADYSAIAIIDLVCGANQDDYHFTNVNWDRDVTNYQIADIRNVVTGDISPDGKGTLELTNGIEVGHIFELEDVYSKPMNANIIGQDGKSKPMLMGCYGFGVSRVMAAAIEQSHDENGIIWPESIAPYQVAILPINYNKSDKVKEVADKLYQDLLGDGIDVLLDDRGARPGVMFADADLIGYSHHVVIGDRLLEQGLIEYKNRKTQEKQEITITELIKILT.

Belongs to the class-II aminoacyl-tRNA synthetase family. ProS type 1 subfamily. In terms of assembly, homodimer.

It localises to the cytoplasm. It carries out the reaction tRNA(Pro) + L-proline + ATP = L-prolyl-tRNA(Pro) + AMP + diphosphate. Functionally, catalyzes the attachment of proline to tRNA(Pro) in a two-step reaction: proline is first activated by ATP to form Pro-AMP and then transferred to the acceptor end of tRNA(Pro). As ProRS can inadvertently accommodate and process non-cognate amino acids such as alanine and cysteine, to avoid such errors it has two additional distinct editing activities against alanine. One activity is designated as 'pretransfer' editing and involves the tRNA(Pro)-independent hydrolysis of activated Ala-AMP. The other activity is designated 'posttransfer' editing and involves deacylation of mischarged Ala-tRNA(Pro). The misacylated Cys-tRNA(Pro) is not edited by ProRS. The sequence is that of Proline--tRNA ligase from Francisella tularensis subsp. novicida (strain U112).